The primary structure comprises 175 residues: MSFNNVSPGKDIPNDFNVIIEIPAQSDPVKYEADKETGLLHVDRFVGTGMRYPANYGFIPQTLAGDGDPVDVLVVTPFPLVHGCVVRCRTLGMLKMTDESGQDAKLVAVPVNKLSPATAHMTDLSDIGQNLLDQIKHFFEQYKALEPGKWVKVEGWGGIEEAHKEIVDGVANYKK.

3 residues coordinate substrate: Lys-30, Arg-44, and Tyr-56. Asp-66, Asp-71, and Asp-103 together coordinate Mg(2+). Tyr-142 lines the substrate pocket.

This sequence belongs to the PPase family. As to quaternary structure, homohexamer. Mg(2+) serves as cofactor.

It localises to the cytoplasm. It catalyses the reaction diphosphate + H2O = 2 phosphate + H(+). Functionally, catalyzes the hydrolysis of inorganic pyrophosphate (PPi) forming two phosphate ions. The polypeptide is Inorganic pyrophosphatase (Ralstonia nicotianae (strain ATCC BAA-1114 / GMI1000) (Ralstonia solanacearum)).